We begin with the raw amino-acid sequence, 785 residues long: (+)-copalyl diphosphate synthase 3, chloroplastic (785 aa).

Substrate is bound at residue lysine 238. Mg(2+)-binding residues include aspartate 371 and aspartate 373. A DXDD motif motif is present at residues 371–374 (DIDD). Lysine 457 serves as a coordination point for substrate.

It belongs to the terpene synthase family. It depends on Mg(2+) as a cofactor. Present in both leaves and flowers, with higher levels in leaves.

It is found in the plastid. The protein localises to the chloroplast. It catalyses the reaction (2E,6E,10E)-geranylgeranyl diphosphate = (+)-copalyl diphosphate. It functions in the pathway secondary metabolite biosynthesis; terpenoid biosynthesis. Involved in the biosynthesis of labdane-type diterpenoid including marrubiin and other labdane-related furanoid diterpenoids with potential applications as anti-diabetics, analgesics or vasorelaxants. Terpene synthase that produces (+)-copalyl diphosphate ((+)-CPP) from geranylgeranyl diphosphate (GGPP). The sequence is that of (+)-copalyl diphosphate synthase 3, chloroplastic from Marrubium vulgare (White horehound).